The sequence spans 320 residues: Taste receptor type 2 member 129 (320 aa).

The Extracellular segment spans residues 1–8 (MDGIVQNM). The helical transmembrane segment at 9-29 (FTFIVIVEIIIGWIGNGFIAL) threads the bilayer. Residues 30-55 (VNCIHWYKRRKISALNQILTALAFSR) are Cytoplasmic-facing. Residues 56–76 (IYLLLTVFTVIAVSTLYTHVL) traverse the membrane as a helical segment. At 77–88 (VTRRVVKLINFH) the chain is on the extracellular side. Residues 89–109 (LLFSNHFSMWLAACLGLYYFL) form a helical membrane-spanning segment. Over 110-128 (KIAHFPNSIFVYLKMRINQ) the chain is Cytoplasmic. The chain crosses the membrane as a helical span at residues 129-149 (VVSGTLLMSLGLLFLNTLLIN). The Extracellular segment spans residues 150 to 185 (SYIDTKIDDYREHLLYDFTSNNTASFYRVILVINNC). Asn-170 is a glycosylation site (N-linked (GlcNAc...) asparagine). Residues 186 to 206 (IFTSIPFTLSQSTFLLLIFSL) form a helical membrane-spanning segment. Over 207–233 (WRHYKKMQQHAQRCRDVLADAHIRVLQ) the chain is Cytoplasmic. A helical transmembrane segment spans residues 234–254 (TMVTYVLLCAIFFLSLSMQIL). The Extracellular portion of the chain corresponds to 255–264 (RSELLKNILY). Residues 265-285 (VRFCEIVAAVFPSGHSCVLIC) form a helical membrane-spanning segment. Topologically, residues 286 to 320 (RDTNLRGTFLSVLSWLKQRFTSWIPNINCRSSCIF) are cytoplasmic.

The protein belongs to the G-protein coupled receptor T2R family.

Its subcellular location is the membrane. Functionally, putative taste receptor which may play a role in the perception of bitterness. This Mus musculus (Mouse) protein is Taste receptor type 2 member 129.